Consider the following 488-residue polypeptide: N-succinylglutamate 5-semialdehyde dehydrogenase (488 aa).

221 to 226 (GSSRTG) serves as a coordination point for NAD(+). Active-site residues include Glu-244 and Cys-278.

Belongs to the aldehyde dehydrogenase family. AstD subfamily.

The enzyme catalyses N-succinyl-L-glutamate 5-semialdehyde + NAD(+) + H2O = N-succinyl-L-glutamate + NADH + 2 H(+). The protein operates within amino-acid degradation; L-arginine degradation via AST pathway; L-glutamate and succinate from L-arginine: step 4/5. Catalyzes the NAD-dependent reduction of succinylglutamate semialdehyde into succinylglutamate. This chain is N-succinylglutamate 5-semialdehyde dehydrogenase, found in Pseudomonas fluorescens (strain SBW25).